Reading from the N-terminus, the 78-residue chain is Hainantoxin-XX (78 aa).

An N-terminal signal peptide occupies residues 1-23; the sequence is MKSATLLALSFLLIALYFLICEA. Residues 24–47 constitute a propeptide that is removed on maturation; sequence EHSRYEEHEILEENMGDVVNLEQR. Cystine bridges form between Cys-49-Cys-62, Cys-56-Cys-66, and Cys-61-Cys-77.

The protein belongs to the hainantoxin family. 20 subfamily. In terms of tissue distribution, expressed by the venom gland.

Its subcellular location is the secreted. Putative ion channel inhibitor. In Cyriopagopus hainanus (Chinese bird spider), this protein is Hainantoxin-XX.